Here is a 346-residue protein sequence, read N- to C-terminus: UDP-3-O-acylglucosamine N-acyltransferase (346 aa).

His-253 acts as the Proton acceptor in catalysis.

It belongs to the transferase hexapeptide repeat family. LpxD subfamily. As to quaternary structure, homotrimer.

The catalysed reaction is a UDP-3-O-[(3R)-3-hydroxyacyl]-alpha-D-glucosamine + a (3R)-hydroxyacyl-[ACP] = a UDP-2-N,3-O-bis[(3R)-3-hydroxyacyl]-alpha-D-glucosamine + holo-[ACP] + H(+). The protein operates within bacterial outer membrane biogenesis; LPS lipid A biosynthesis. Its function is as follows. Catalyzes the N-acylation of UDP-3-O-acylglucosamine using 3-hydroxyacyl-ACP as the acyl donor. Is involved in the biosynthesis of lipid A, a phosphorylated glycolipid that anchors the lipopolysaccharide to the outer membrane of the cell. The chain is UDP-3-O-acylglucosamine N-acyltransferase from Rickettsia akari (strain Hartford).